The chain runs to 74 residues: Large ribosomal subunit protein bL31 (74 aa).

The protein belongs to the bacterial ribosomal protein bL31 family. Type A subfamily. Part of the 50S ribosomal subunit.

In terms of biological role, binds the 23S rRNA. This chain is Large ribosomal subunit protein bL31, found in Afipia carboxidovorans (strain ATCC 49405 / DSM 1227 / KCTC 32145 / OM5) (Oligotropha carboxidovorans).